The sequence spans 426 residues: Homeobox protein knotted-1-like LET12 (426 aa).

3 disordered regions span residues 1–26, 85–158, and 270–290; these read MEFQ…QQNA, QTSN…ENSW, and GVAP…DQAD. Positions 15–24 are enriched in low complexity; that stretch reads QQQQQQQQQQ. Gly residues predominate over residues 104–114; it reads AGGGSNGGGSG. A compositionally biased stretch (low complexity) spans 139 to 151; it reads ENNNNNNNNNNNN. The ELK domain occupies 327–347; the sequence is ELKHELKQGYKEKIVDIREEI. Positions 348-411 form a DNA-binding region, homeobox; TALE-type; it reads LRKRRAGKLP…NQRKRNWHSN (64 aa). Residues 406 to 426 are disordered; sequence RNWHSNPSTSSSQKSQTQECR. The span at 413 to 426 shows a compositional bias: low complexity; that stretch reads STSSSQKSQTQECR.

This sequence belongs to the TALE/KNOX homeobox family. Ubiquitously expressed in the mature plant.

Its subcellular location is the nucleus. Its function is as follows. May have a role to play in formative events in ovule and embryo morphogenesis. This is Homeobox protein knotted-1-like LET12 (LET12) from Solanum lycopersicum (Tomato).